We begin with the raw amino-acid sequence, 276 residues long: Nickel import system permease protein NikC (276 aa).

Helical transmembrane passes span 10–30, 73–93, 108–128, 186–206, and 238–258; these read LIFF…FFVS, LFVT…LGLF, FIDV…ASFF, IIPA…LYIS, and IMLI…NLTG. The ABC transmembrane type-1 domain occupies 69 to 258; the sequence is ARSTLFVTVL…ITILIFNLTG (190 aa).

It belongs to the binding-protein-dependent transport system permease family. OppBC subfamily. In terms of assembly, the complex is composed of two ATP-binding proteins (NikD and NikE), two transmembrane proteins (NikB and NikC) and a solute-binding protein (NikA).

The protein resides in the cell membrane. In terms of biological role, part of the ABC transporter complex NikABCDE (Opp2) involved in nickel import. Probably responsible for the translocation of the substrate across the membrane. This is Nickel import system permease protein NikC from Staphylococcus aureus (strain Mu50 / ATCC 700699).